We begin with the raw amino-acid sequence, 735 residues long: Lebercilin-like protein (735 aa).

2 disordered regions span residues 12 to 54 (TEAH…NGSV) and 91 to 115 (EKPL…RGQK). Over residues 43 to 53 (QSQNSQASNGS) the composition is skewed to low complexity. A coiled-coil region spans residues 205-335 (TAKHQNEVKN…QQKLKEKDRE (131 aa)). 4 disordered regions span residues 356 to 379 (YPKV…NMRH), 473 to 597 (SKEV…PRKH), 632 to 657 (KHRS…AGAR), and 685 to 735 (GRAG…KTVV). Basic and acidic residues predominate over residues 487-525 (TPRRPKENKEDQEKRAIPAEAEPTAKESEAHKDAEDKAL). The span at 528-541 (AAGNAGDAGDAGDA) shows a compositional bias: low complexity. Basic and acidic residues-rich tracts occupy residues 542 to 553 (GNDREVVGEHKV), 573 to 588 (EVHG…EPGR), and 632 to 641 (KHRSEQELRL). Positions 689-707 (SSDSEAVSKSPQTGPQASA) are enriched in polar residues.

This sequence belongs to the LCA5 family.

This chain is Lebercilin-like protein, found in Mus musculus (Mouse).